Here is a 492-residue protein sequence, read N- to C-terminus: MEPSSKKVTGRLMLAVGGAVLGSLQFGYNTGVINAPQKVIEEFYNQTWNHRYGESIPSTTLTTLWSLSVAIFSVGGMIGSFSVGLFVNRFGRRNSMLMMNLLAFVSAVLMGFSKLGKSFEMLILGRFIIGVYCGLTTGFVPMYVGEVSPTALRGALGTLHQLGIVVGILIAQVFGLDSIMGNADLWPLLLSVIFIPALLQCILLPFCPESPRFLLINRNEENRAKSVLKKLRGTADVTRDLQEMKEEGRQMMREKKVTILELFRSPAYRQPILIAVVLQLSQQLSGINAVFYYSTSIFEKAGVQQPVYATIGSGIVNTAFTVVSLFVVERAGRRTLHLIGLAGMAGCAVLMTIALALLEQLPWMSYLSIVAIFGFVAFFEVGPGPIPWFIVAELFSQGPRPAAVAVAGFSNWTSNFIVGMCFQYVEQLCGPYVFIIFTVLLVLFFIFTYFKVPETKGRTFDEIASGFRQGGASQSDKTPEELFHPLGADSQV.

The residue at position 1 (M1) is an N-acetylmethionine. The Cytoplasmic segment spans residues 1–11 (MEPSSKKVTGR). Residues 12–33 (LMLAVGGAVLGSLQFGYNTGVI) form a helical membrane-spanning segment. At 34 to 66 (NAPQKVIEEFYNQTWNHRYGESIPSTTLTTLWS) the chain is on the extracellular side. An N-linked (GlcNAc...) asparagine glycan is attached at N45. A helical membrane pass occupies residues 67–87 (LSVAIFSVGGMIGSFSVGLFV). Residues 88 to 90 (NRF) lie on the Cytoplasmic side of the membrane. A helical membrane pass occupies residues 91-112 (GRRNSMLMMNLLAFVSAVLMGF). Over 113 to 120 (SKLGKSFE) the chain is Extracellular. Residues 121-144 (MLILGRFIIGVYCGLTTGFVPMYV) form a helical membrane-spanning segment. At 145 to 155 (GEVSPTALRGA) the chain is on the cytoplasmic side. The helical transmembrane segment at 156 to 176 (LGTLHQLGIVVGILIAQVFGL) threads the bilayer. Position 161 (Q161) interacts with D-glucose. Residues 177–185 (DSIMGNADL) lie on the Extracellular side of the membrane. The chain crosses the membrane as a helical span at residues 186-206 (WPLLLSVIFIPALLQCILLPF). The Cytoplasmic portion of the chain corresponds to 207–271 (CPESPRFLLI…LFRSPAYRQP (65 aa)). Position 226 is a phosphoserine (S226). A helical membrane pass occupies residues 272–293 (ILIAVVLQLSQQLSGINAVFYY). Residues 282 to 283 (QQ) and N288 each bind D-glucose. Residues 294–306 (STSIFEKAGVQQP) lie on the Extracellular side of the membrane. A helical transmembrane segment spans residues 307-328 (VYATIGSGIVNTAFTVVSLFVV). N317 contacts D-glucose. At 329–334 (ERAGRR) the chain is on the cytoplasmic side. Residues 335-355 (TLHLIGLAGMAGCAVLMTIAL) traverse the membrane as a helical segment. The Extracellular segment spans residues 356–365 (ALLEQLPWMS). A helical transmembrane segment spans residues 366-388 (YLSIVAIFGFVAFFEVGPGPIPW). D-glucose contacts are provided by E380 and W388. At 389–401 (FIVAELFSQGPRP) the chain is on the cytoplasmic side. The chain crosses the membrane as a helical span at residues 402 to 422 (AAVAVAGFSNWTSNFIVGMCF). Over 423 to 429 (QYVEQLC) the chain is Extracellular. Residues 430–450 (GPYVFIIFTVLLVLFFIFTYF) traverse the membrane as a helical segment. At 451-492 (KVPETKGRTFDEIASGFRQGGASQSDKTPEELFHPLGADSQV) the chain is on the cytoplasmic side. S465 bears the Phosphoserine mark. The segment at 468–492 (RQGGASQSDKTPEELFHPLGADSQV) is disordered. Phosphothreonine is present on T478. S490 is modified (phosphoserine).

The protein belongs to the major facilitator superfamily. Sugar transporter (TC 2.A.1.1) family. Glucose transporter subfamily. In terms of assembly, found in a complex with ADD2, DMTN and SLC2A1. Interacts (via C-terminus cytoplasmic region) with DMTN. Interacts with SNX27; the interaction is required when endocytosed to prevent degradation in lysosomes and promote recycling to the plasma membrane. Interacts with STOM. Interacts with GIPC (via PDZ domain). Interacts with SGTA (via Gln-rich region). Interacts with isoform 1 of BSG. Interacts with SMIM43; the interaction may promote SLC2A1-mediated glucose transport to meet the energy needs of mesendoderm differentiation. Post-translationally, phosphorylation at Ser-226 by PKC promotes glucose uptake by increasing cell membrane localization. In terms of tissue distribution, detected in osteoblastic cells (at protein level). Detected in brain, and at lower levels in kidney, heart and lung.

It is found in the cell membrane. It localises to the photoreceptor inner segment. It catalyses the reaction D-glucose(out) = D-glucose(in). The uptake of glucose is inhibited by cytochalasin B. Glucose uptake is increased in response to phorbol ester 12-O-tetradecanoylphorbol-13-acetate (TPA) treatment: TPA-induced glucose uptake requires phosphorylation at Ser-226. Its function is as follows. Facilitative glucose transporter, which is responsible for constitutive or basal glucose uptake. Has a very broad substrate specificity; can transport a wide range of aldoses including both pentoses and hexoses. Most important energy carrier of the brain: present at the blood-brain barrier and assures the energy-independent, facilitative transport of glucose into the brain. In association with BSG and NXNL1, promotes retinal cone survival by increasing glucose uptake into photoreceptors. Required for mesendoderm differentiation. The polypeptide is Solute carrier family 2, facilitated glucose transporter member 1 (Rattus norvegicus (Rat)).